A 353-amino-acid polypeptide reads, in one-letter code: Photosystem II protein D1 (353 aa).

Thr2 is modified (N-acetylthreonine). Thr2 is modified (phosphothreonine). The next 3 helical transmembrane spans lie at 29-46, 118-133, and 142-156; these read YIGW…TATS, HFFI…EWEL, and WIAV…AATA. His118 serves as a coordination point for chlorophyll a. A pheophytin a-binding site is contributed by Tyr126. [CaMn4O5] cluster contacts are provided by Asp170 and Glu189. The chain crosses the membrane as a helical span at residues 197-218; sequence FHMLGVAGVFGGSLFSAMHGSL. His198 lines the chlorophyll a pocket. A quinone is bound by residues His215 and 264–265; that span reads SF. Residue His215 participates in Fe cation binding. Residue His272 coordinates Fe cation. The chain crosses the membrane as a helical span at residues 274-288; sequence FLAIWPVVGIWFTAL. Positions 332, 333, 342, and 344 each coordinate [CaMn4O5] cluster. Positions 345–353 are excised as a propeptide; sequence SVEAPSING.

The protein belongs to the reaction center PufL/M/PsbA/D family. As to quaternary structure, PSII is composed of 1 copy each of membrane proteins PsbA, PsbB, PsbC, PsbD, PsbE, PsbF, PsbH, PsbI, PsbJ, PsbK, PsbL, PsbM, PsbT, PsbX, PsbY, PsbZ, Psb30/Ycf12, at least 3 peripheral proteins of the oxygen-evolving complex and a large number of cofactors. It forms dimeric complexes. The D1/D2 heterodimer binds P680, chlorophylls that are the primary electron donor of PSII, and subsequent electron acceptors. It shares a non-heme iron and each subunit binds pheophytin, quinone, additional chlorophylls, carotenoids and lipids. D1 provides most of the ligands for the Mn4-Ca-O5 cluster of the oxygen-evolving complex (OEC). There is also a Cl(-1) ion associated with D1 and D2, which is required for oxygen evolution. The PSII complex binds additional chlorophylls, carotenoids and specific lipids. is required as a cofactor. In terms of processing, tyr-161 forms a radical intermediate that is referred to as redox-active TyrZ, YZ or Y-Z. C-terminally processed by CTPA; processing is essential to allow assembly of the oxygen-evolving complex and thus photosynthetic growth.

It is found in the plastid. The protein localises to the chloroplast thylakoid membrane. It catalyses the reaction 2 a plastoquinone + 4 hnu + 2 H2O = 2 a plastoquinol + O2. In terms of biological role, photosystem II (PSII) is a light-driven water:plastoquinone oxidoreductase that uses light energy to abstract electrons from H(2)O, generating O(2) and a proton gradient subsequently used for ATP formation. It consists of a core antenna complex that captures photons, and an electron transfer chain that converts photonic excitation into a charge separation. The D1/D2 (PsbA/PsbD) reaction center heterodimer binds P680, the primary electron donor of PSII as well as several subsequent electron acceptors. The chain is Photosystem II protein D1 from Stigeoclonium helveticum (Green alga).